Here is a 595-residue protein sequence, read N- to C-terminus: uncharacterized protein (595 aa).

9 helical membrane-spanning segments follow: residues 64–84 (VVFL…LIVF), 86–106 (IFYA…IGVL), 239–259 (FYVI…PVAS), 281–301 (FYLW…GILP), 334–354 (VHFI…LFFI), 368–388 (MFGI…HFII), 504–524 (FIYV…SYIM), 547–567 (YLFQ…GILT), and 571–591 (IIAG…LFKF).

The protein to M.jannaschii FlaJ.

It is found in the cell membrane. This is an uncharacterized protein from Methanocaldococcus jannaschii (strain ATCC 43067 / DSM 2661 / JAL-1 / JCM 10045 / NBRC 100440) (Methanococcus jannaschii).